A 552-amino-acid chain; its full sequence is WAP, Kazal, immunoglobulin, Kunitz and NTR domain-containing protein 1 (552 aa).

The N-terminal stretch at 1–25 (MPAPQPFLPLLFVFVLIHLTSETNL) is a signal peptide. Positions 29 to 82 (PGSHPGMCPNELSPHLWVDAQSTCERECTGDQDCAASEKCCTNVCGLQSCVAAR) constitute a WAP domain. 17 cysteine pairs are disulfide-bonded: cysteine 36/cysteine 69, cysteine 52/cysteine 73, cysteine 56/cysteine 68, cysteine 62/cysteine 78, cysteine 120/cysteine 150, cysteine 124/cysteine 143, cysteine 132/cysteine 161, cysteine 211/cysteine 267, cysteine 303/cysteine 355, cysteine 310/cysteine 338, cysteine 330/cysteine 351, cysteine 363/cysteine 413, cysteine 372/cysteine 396, cysteine 388/cysteine 409, cysteine 421/cysteine 493, cysteine 424/cysteine 495, and cysteine 435/cysteine 544. Residues 112-163 (WDGQPVCRCRDRCEKEPSFTCASDGLTYYNRCYMDAEACLRGLHLHVVPCKH) enclose the Kazal-like domain. One can recognise an Ig-like C2-type domain in the interval 190–283 (PALYNSPSPQ…GLLRADFPLS (94 aa)). 2 consecutive BPTI/Kunitz inhibitor domains span residues 289-355 (TTQD…QQAC) and 363-413 (CALP…EDAC). In terms of domain architecture, NTR spans 413–544 (CPVPRTPPCR…IVELLEKKAC (132 aa)). N-linked (GlcNAc...) asparagine glycosylation is present at asparagine 497.

It belongs to the WFIKKN family.

Its subcellular location is the secreted. In terms of biological role, protease-inhibitor that contains multiple distinct protease inhibitor domains. Probably has serine protease- and metalloprotease-inhibitor activity. This is WAP, Kazal, immunoglobulin, Kunitz and NTR domain-containing protein 1 (Wfikkn1) from Mus musculus (Mouse).